The chain runs to 473 residues: Nitrogenase vanadium-iron protein alpha chain (473 aa).

[8Fe-7S] cluster is bound by residues cysteine 49, cysteine 74, and cysteine 137. Positions 256 and 422 each coordinate [7Fe-V-9S-C-homocitryl] cluster.

Belongs to the NifD/NifK/NifE/NifN family. In terms of assembly, hexamer of two alpha, two beta, and two delta chains. [8Fe-7S] cluster serves as cofactor. It depends on [7Fe-V-9S-C-homocitryl] cluster as a cofactor.

It catalyses the reaction N2 + 8 reduced [2Fe-2S]-[ferredoxin] + 16 ATP + 16 H2O = H2 + 8 oxidized [2Fe-2S]-[ferredoxin] + 2 NH4(+) + 16 ADP + 16 phosphate + 6 H(+). This vanadium-iron protein is part of the nitrogenase complex that catalyzes the key enzymatic reactions in nitrogen fixation. The chain is Nitrogenase vanadium-iron protein alpha chain (vnfD) from Azotobacter chroococcum mcd 1.